A 478-amino-acid chain; its full sequence is MAAFDYNVKDLSLAEAGRHQIRLAEYEMPGLMQLREEYQQEQPLAGARITGSIHMTVQTAVLIETLVALGAQVRWASCNIFSTQDEAAAAVVVGPHGTPEDPQGVPVFAWKGETLEEYWDCVDKIFSWGDELPNMILDDGGDATMAVIRGKQFEEAGMVPPVEEGDSDEYQAFLGMLRKTLAEQPGKWTAIAESVKGVTEETTTGVHRLYHFAEEGVLPFPAMNVNDAVTKSKFDNKYGTRHSLIDGINRATDMLMGGKNVLICGYGDVGKGCAEAMAGQGARVKVTEADPINALQALMDGFPVVHVDQAIGDADIVITATGNMGIISFEQMLAMKDHAVLGNIGHFDNEIDMASLLHRDDVSRVTIKPQVDEFTLPNGKSIVVLSEGRLLNLGNATGHPSFVMSTSFADQTIAQIELFQNDGRYVNEVYRLPKILDEKVARIHVEALGGTITELTKEQAEYIGVDVAGPYKPEHYRY.

Substrate is bound by residues threonine 56, aspartate 139, and glutamate 201. Position 202-204 (202-204 (TTT)) interacts with NAD(+). The substrate site is built by lysine 231 and aspartate 235. Residues asparagine 236, 265-270 (GYGDVG), glutamate 288, asparagine 323, 344-346 (IGH), and asparagine 392 contribute to the NAD(+) site.

The protein belongs to the adenosylhomocysteinase family. Requires NAD(+) as cofactor.

It is found in the cytoplasm. It catalyses the reaction S-adenosyl-L-homocysteine + H2O = L-homocysteine + adenosine. Its pathway is amino-acid biosynthesis; L-homocysteine biosynthesis; L-homocysteine from S-adenosyl-L-homocysteine: step 1/1. May play a key role in the regulation of the intracellular concentration of adenosylhomocysteine. The sequence is that of Adenosylhomocysteinase from Corynebacterium diphtheriae (strain ATCC 700971 / NCTC 13129 / Biotype gravis).